Consider the following 309-residue polypeptide: Protein FdhE (309 aa).

It belongs to the FdhE family.

It is found in the cytoplasm. In terms of biological role, necessary for formate dehydrogenase activity. The protein is Protein FdhE of Escherichia coli O139:H28 (strain E24377A / ETEC).